The chain runs to 198 residues: Translation initiation factor IF-3 (198 aa).

Residues 168 to 198 are disordered; it reads SLAPKKAGSPKKAETDTAKKENPKKAVETKE. Residues 178–198 show a composition bias toward basic and acidic residues; the sequence is KKAETDTAKKENPKKAVETKE.

Belongs to the IF-3 family. Monomer.

It localises to the cytoplasm. Its function is as follows. IF-3 binds to the 30S ribosomal subunit and shifts the equilibrium between 70S ribosomes and their 50S and 30S subunits in favor of the free subunits, thus enhancing the availability of 30S subunits on which protein synthesis initiation begins. In Phocaeicola vulgatus (strain ATCC 8482 / DSM 1447 / JCM 5826 / CCUG 4940 / NBRC 14291 / NCTC 11154) (Bacteroides vulgatus), this protein is Translation initiation factor IF-3.